Consider the following 425-residue polypeptide: Stabilizer of axonemal microtubules 4 (425 aa).

Disordered stretches follow at residues 259-297 (RGSD…YQPP) and 315-335 (NKEP…SYEQ). Over residues 260–272 (GSDRDTGYSRVSE) the composition is skewed to basic and acidic residues. The span at 277 to 290 (PRMPTPSSQPTSMS) shows a compositional bias: low complexity. The segment covering 321–332 (FTLNNPSYVRSS) has biased composition (polar residues).

In terms of assembly, microtubule inner protein component of sperm flagellar doublet microtubules. Interacts with PPP1CA. In terms of tissue distribution, expressed in brain, ovaries and testis. Expressed in the tracheal epithelium and in secondary spermatocytes and spermatids present in the seminiferous tubule. Expressed in ependymal cells lining the ventricular walls of the brain.

It is found in the cell projection. The protein resides in the cilium. The protein localises to the cytoplasm. Its subcellular location is the cytoskeleton. It localises to the flagellum axoneme. The polypeptide is Stabilizer of axonemal microtubules 4 (Rattus norvegicus (Rat)).